The sequence spans 411 residues: Histidine--tRNA ligase (411 aa).

This sequence belongs to the class-II aminoacyl-tRNA synthetase family. As to quaternary structure, homodimer.

The protein resides in the cytoplasm. It catalyses the reaction tRNA(His) + L-histidine + ATP = L-histidyl-tRNA(His) + AMP + diphosphate + H(+). This Dictyoglomus turgidum (strain DSM 6724 / Z-1310) protein is Histidine--tRNA ligase.